The following is a 458-amino-acid chain: ATP synthase subunit beta (458 aa).

148–155 (GGAGVGKT) lines the ATP pocket.

The protein belongs to the ATPase alpha/beta chains family. In terms of assembly, F-type ATPases have 2 components, CF(1) - the catalytic core - and CF(0) - the membrane proton channel. CF(1) has five subunits: alpha(3), beta(3), gamma(1), delta(1), epsilon(1). CF(0) has three main subunits: a(1), b(2) and c(9-12). The alpha and beta chains form an alternating ring which encloses part of the gamma chain. CF(1) is attached to CF(0) by a central stalk formed by the gamma and epsilon chains, while a peripheral stalk is formed by the delta and b chains.

The protein localises to the cell inner membrane. The catalysed reaction is ATP + H2O + 4 H(+)(in) = ADP + phosphate + 5 H(+)(out). Its function is as follows. Produces ATP from ADP in the presence of a proton gradient across the membrane. The catalytic sites are hosted primarily by the beta subunits. The chain is ATP synthase subunit beta from Pseudomonas putida (strain W619).